A 217-amino-acid chain; its full sequence is Uracil phosphoribosyltransferase (217 aa).

5-phospho-alpha-D-ribose 1-diphosphate-binding positions include Arg-84, Arg-109, and 137–145 (DPMLATGGS). Residues Ile-202 and 207 to 209 (GDA) each bind uracil. Asp-208 serves as a coordination point for 5-phospho-alpha-D-ribose 1-diphosphate.

It belongs to the UPRTase family. The cofactor is Mg(2+).

The catalysed reaction is UMP + diphosphate = 5-phospho-alpha-D-ribose 1-diphosphate + uracil. The protein operates within pyrimidine metabolism; UMP biosynthesis via salvage pathway; UMP from uracil: step 1/1. With respect to regulation, allosterically activated by GTP. Catalyzes the conversion of uracil and 5-phospho-alpha-D-ribose 1-diphosphate (PRPP) to UMP and diphosphate. The sequence is that of Uracil phosphoribosyltransferase from Synechococcus elongatus (strain ATCC 33912 / PCC 7942 / FACHB-805) (Anacystis nidulans R2).